The primary structure comprises 403 residues: Heparan-sulfate 6-O-sulfotransferase 2 (403 aa).

Residues 1 to 7 (MEDRSHK) are Cytoplasmic-facing. The helical; Signal-anchor for type II membrane protein transmembrane segment at 8-28 (VLLALVMLFLFAVIVLQYVCP) threads the bilayer. At 29–403 (GTECQLLRLR…DYLGNVERWR (375 aa)) the chain is on the lumenal side. Asparagine 64 is a glycosylation site (N-linked (GlcNAc...) asparagine). 88 to 96 (HIQKTGGTT) is a binding site for 3'-phosphoadenylyl sulfate. Residues 118-119 (KK), arginine 135, tryptophan 140, and histidine 145 each bind substrate. The active-site Proton acceptor is the histidine 145. 3'-phosphoadenylyl sulfate is bound by residues arginine 180 and serine 188. Substrate-binding residues include histidine 192 and tryptophan 199. A glycan (N-linked (GlcNAc...) asparagine) is linked at asparagine 259. Position 312–314 (312–314 (TQY)) interacts with 3'-phosphoadenylyl sulfate. Asparagine 315 carries N-linked (GlcNAc...) asparagine glycosylation. Residue 318–319 (RA) coordinates 3'-phosphoadenylyl sulfate. The segment at 381 to 403 (AHLREQGENSSSTDYLGNVERWR) is disordered. An N-linked (GlcNAc...) asparagine glycan is attached at asparagine 389.

The protein belongs to the sulfotransferase 6 family.

It localises to the membrane. The enzyme catalyses alpha-D-glucosaminyl-[heparan sulfate](n) + 3'-phosphoadenylyl sulfate = 6-sulfo-alpha-D-glucosaminyl-[heparan sulfate](n) + adenosine 3',5'-bisphosphate + H(+). Its function is as follows. 6-O-sulfation enzyme which catalyzes the transfer of sulfate from 3'-phosphoadenosine 5'-phosphosulfate (PAPS) to position 6 of the N-sulfoglucosamine residue (GlcNS) of heparan sulfate. May also play a role in limb development. The protein is Heparan-sulfate 6-O-sulfotransferase 2 (HS6ST2) of Gallus gallus (Chicken).